A 1389-amino-acid polypeptide reads, in one-letter code: DNA-directed RNA polymerase subunit beta (1389 aa).

Belongs to the RNA polymerase beta chain family. In terms of assembly, in plastids the minimal PEP RNA polymerase catalytic core is composed of four subunits: alpha, beta, beta', and beta''. When a (nuclear-encoded) sigma factor is associated with the core the holoenzyme is formed, which can initiate transcription.

It localises to the plastid. The protein resides in the chloroplast. It catalyses the reaction RNA(n) + a ribonucleoside 5'-triphosphate = RNA(n+1) + diphosphate. Its function is as follows. DNA-dependent RNA polymerase catalyzes the transcription of DNA into RNA using the four ribonucleoside triphosphates as substrates. This chain is DNA-directed RNA polymerase subunit beta, found in Phaeodactylum tricornutum (strain CCAP 1055/1).